A 602-amino-acid chain; its full sequence is MQHDLPGGRHDEADSSETGGAGTTENPSSEQARQIRFLEEEVALLRRKLTDSPRQNRVLEQRLAEANERVSQLTERNNKLVETLREARSQLLALREEVDRLAQPPSGYGVFIAAYDDNTVDVFTSGRKMRVAVSPTVDIQSLRRGQSVRLNEALTVVEVGGFESTGEVCTLREVLAPDTEGGSARALVAGHTDEERVVWLADPLAEQTLKPGDSLLVDPKAGYAYERVPKAEVEDLVLEEVPDVRYEDIGGLYRQIEQIRDAVELPFLHADLYTQYKLRPPKGVLLYGPPGCGKTLIAKAVANSLAKQVAAATGEKDAKSYFLNIKGPELLNKFVGETERHIRMIFQRAREKASDGTPVIVFFDEMESIFRTRGSGVSSDVETTIVPQLLSEIDGVEGLENVIVIGASNREDMIDPAILRPGRLDVKIKIERPDAEGAKDIFSKYLTPDLPIHADDLAEFGGDRQATIDAMIQHTVERMYEESEENRFLEVTYANGDKEVLYFRDFNSGAMIQNIVDRAKKAAIKSVLETNQPGLRVQHLLDAIVDEFAENEDLPNTTNPDDWARISGKKGERIVYIRTLVTGKNQESGRVIDTATNTGQYL.

Positions 1 to 13 are enriched in basic and acidic residues; the sequence is MQHDLPGGRHDEA. Positions 1–33 are disordered; it reads MQHDLPGGRHDEADSSETGGAGTTENPSSEQAR. A compositionally biased stretch (polar residues) spans 23-32; that stretch reads TTENPSSEQA. Positions 28 to 103 form a coiled coil; sequence SSEQARQIRF…LREEVDRLAQ (76 aa). 291–296 contacts ATP; sequence GCGKTL. The tract at residues 601 to 602 is docks into pockets in the proteasome alpha-ring; it reads YL.

It belongs to the AAA ATPase family. As to quaternary structure, homohexamer. Assembles into a hexameric ring structure that caps the 20S proteasome core. Strongly interacts with the prokaryotic ubiquitin-like protein Pup through a hydrophobic interface; the interacting region of ARC lies in its N-terminal coiled-coil domain. There is one Pup binding site per ARC hexamer ring. Upon ATP-binding, the C-terminus of ARC interacts with the alpha-rings of the proteasome core, possibly by binding to the intersubunit pockets.

The protein operates within protein degradation; proteasomal Pup-dependent pathway. ATPase which is responsible for recognizing, binding, unfolding and translocation of pupylated proteins into the bacterial 20S proteasome core particle. May be essential for opening the gate of the 20S proteasome via an interaction with its C-terminus, thereby allowing substrate entry and access to the site of proteolysis. Thus, the C-termini of the proteasomal ATPase may function like a 'key in a lock' to induce gate opening and therefore regulate proteolysis. This chain is Proteasome-associated ATPase, found in Saccharomonospora viridis (strain ATCC 15386 / DSM 43017 / JCM 3036 / CCUG 5913 / NBRC 12207 / NCIMB 9602 / P101) (Thermoactinomyces viridis).